A 296-amino-acid chain; its full sequence is Ribosomal protein L11 methyltransferase (296 aa).

S-adenosyl-L-methionine-binding residues include Thr-146, Gly-167, Asp-189, and Asn-231.

It belongs to the methyltransferase superfamily. PrmA family.

The protein resides in the cytoplasm. It catalyses the reaction L-lysyl-[protein] + 3 S-adenosyl-L-methionine = N(6),N(6),N(6)-trimethyl-L-lysyl-[protein] + 3 S-adenosyl-L-homocysteine + 3 H(+). In terms of biological role, methylates ribosomal protein L11. This Haemophilus influenzae (strain ATCC 51907 / DSM 11121 / KW20 / Rd) protein is Ribosomal protein L11 methyltransferase.